The primary structure comprises 224 residues: Large ribosomal subunit protein uL1 (224 aa).

The protein belongs to the universal ribosomal protein uL1 family. Part of the 50S ribosomal subunit.

Functionally, binds directly to 23S rRNA. The L1 stalk is quite mobile in the ribosome, and is involved in E site tRNA release. Protein L1 is also a translational repressor protein, it controls the translation of the L11 operon by binding to its mRNA. In Borrelia recurrentis (strain A1), this protein is Large ribosomal subunit protein uL1.